The primary structure comprises 413 residues: RING-H2 finger protein ATL54 (413 aa).

A helical membrane pass occupies residues Ile-83–Val-103. An RING-type; atypical zinc finger spans residues Cys-177–Arg-219. Disordered regions lie at residues Val-238–Gly-258 and Thr-321–Leu-413. Positions Ser-387–Ser-401 are enriched in low complexity. Polar residues predominate over residues Cys-402–Leu-413.

This sequence belongs to the RING-type zinc finger family. ATL subfamily.

The protein resides in the membrane. It catalyses the reaction S-ubiquitinyl-[E2 ubiquitin-conjugating enzyme]-L-cysteine + [acceptor protein]-L-lysine = [E2 ubiquitin-conjugating enzyme]-L-cysteine + N(6)-ubiquitinyl-[acceptor protein]-L-lysine.. Its pathway is protein modification; protein ubiquitination. This is RING-H2 finger protein ATL54 (ATL54) from Arabidopsis thaliana (Mouse-ear cress).